Reading from the N-terminus, the 801-residue chain is Squamosa promoter-binding-like protein 7 (801 aa).

Disordered stretches follow at residues 1–23 and 59–91; these read MSSLSQSPPPPEMDIQPPALVND and SPPLPPLIPTQTPAESELDPSPEESGSGSDRVR. An SBP-type; atypical zinc finger spans residues 135 to 212; that stretch reads VARCQVPDCE…ERHNNRRKRK (78 aa). Cys-138, Cys-143, Cys-160, Cys-163, Cys-179, Cys-182, His-186, and Cys-198 together coordinate Zn(2+). The short motif at 195 to 211 is the Bipartite nuclear localization signal element; sequence KRSCRRKLERHNNRRKR. Positions 203-213 are enriched in basic residues; it reads ERHNNRRKRKP. Disordered regions lie at residues 203–258 and 286–313; these read ERHN…PSLI and GSGEAQPDEGMNDTKFERSPSNGDNKSA. A compositionally biased stretch (polar residues) spans 222–233; sequence EQQQVLSQNDNS. Residues 249–258 show a composition bias toward basic and acidic residues; it reads QRAEEEPSLI. A compositionally biased stretch (polar residues) spans 304-313; that stretch reads SPSNGDNKSA.

Homodimer. Interacts with KIN17. Interacts with HY5. The cofactor is Zn(2+). As to expression, expressed in roots rosette leaves, cauline leaves, stems, flowers and siliques.

It is found in the nucleus speckle. Its function is as follows. Transcription factor that participates in reprogramming global gene expression during copper deficiency in order to improve the metal uptake and prioritize its distribution to copper proteins of major importance. Binds directly to 5'-GTAC-3' motifs in the microRNA (miRNA) promoter of the stress-responsive miRNAs miR398b and miR398c to activate their transcription. During copper deficiency, activates the copper transporters COPT1 and COPT2, and the copper chaperone CCH, directly or indirectly via miRNAs. Required for the expression of the miRNAs miR397, miR408 and miR857. Acts coordinately with HY5 to regulate miR408 and its target genes in response to changes in light and copper conditions. Activates miR857 and its target genes in response to low copper conditions. Involved in cadmium stress response by regulating miR397a, miR398b, miR398c and miR857. Required for iron homeostasis during copper deficiency. In Arabidopsis thaliana (Mouse-ear cress), this protein is Squamosa promoter-binding-like protein 7 (SPL7).